A 502-amino-acid polypeptide reads, in one-letter code: Lysine--tRNA ligase (502 aa).

Residues Glu-409 and Glu-416 each contribute to the Mg(2+) site.

Belongs to the class-II aminoacyl-tRNA synthetase family. Homodimer. Mg(2+) is required as a cofactor.

Its subcellular location is the cytoplasm. It catalyses the reaction tRNA(Lys) + L-lysine + ATP = L-lysyl-tRNA(Lys) + AMP + diphosphate. This is Lysine--tRNA ligase from Prochlorococcus marinus (strain SARG / CCMP1375 / SS120).